The following is a 1129-amino-acid chain: MAFVPVIPESYSHVLAEFESLDPLLSALRLDSSRLKCTSIAVSRKWLALGSSGGGLHLIQKEGWKHRLFLSHREGAISQVACCLHDDDYVAVATSQGLVVVWELNQERRGKPEQMYVSSEHKGRRVTALCWDTAILRVFVGDHAGKVSAIKLNTSKQAKAAAAFVMFPVQTITTVDSCVVQLDYLDGRLLISSLTRSFLCDTEREKFWKIGNKERDGEYGACFFPGRCSGGQQPLIYCARPGSRMWEVNFDGEVISTHQFKKLLSLPPLPVITLRSEPQYDHTAGSSQSLSFPKLLHLSEHCVLTWTERGIYIFIPQNVQVLLWSEVKDIQDVAVCRNELFCLHLNGKVSHLSLISVERCVERLLRRGLWNLAARTCCLFQNSVIASRARKTLTADKLEHLKSQLDHGTYNDLISQLEELILKFEPLDSACSSRRSSISSHESFSILDSGIYRIISSRRGSQSDEDSCSLHSQTLSEDERFKEFTSQQEEDLPDQCCGSHGNEDNVSHAPVMFETDKNETFLPFGIPLPFRSPSPLVSLQAVKESVSSFVRKTTEKIGTLHTSPDLKVRPELRGDEQSCEEDVSSDTCPKEEDTEEEKEVTSPPPEEDRFQELKVATAEAMTKLQDPLVLFESESLRMVLQEWLSHLEKTFAMKDFSGVSDTDNSSMKLNQDVLLVNESKKGILDEDNEKEKRDSLGNEESVDKTACECVRSPRESLDDLFQICSPCAIASGLRNDLAELTTLCLELNVLNSKIKSTSGHVDHTLQQYSPEILACQFLKKYFFLLNLKRAKESIKLSYSNSPSVWDTFIEGLKEMASSNPVYMEMEKGDLPTRLKLLDDEVPFDSPLLVVYATRLYEKFGESALRSLIKFFPSILPSDIIQLCHHHPAEFLAYLDSLVKSRPEDQRSSFLESLLQPESLRLDWLLLAVSLDAPPSTSTMDDEGYPRPHSHLLSWGYSQLILHLIKLPADFITKEKMTDICRSCGFWPGYLILCLELERRREAFTNIVYLNDMSLMEGDNGWIPETVEEWKLLLHLIQSKSTRPAPQESLNGSLSDGPSPINVENVALLLAKAMGPDRAWSLLQECGLALELSEKFTRTCDILRIAEKRQRALIQSMLEKCDRFLWSQQA.

Residues 483–503 (EFTSQQEEDLPDQCCGSHGNE) are disordered. 2 positions are modified to phosphoserine: Ser-532 and Ser-534. Residues 561–609 (HTSPDLKVRPELRGDEQSCEEDVSSDTCPKEEDTEEEKEVTSPPPEEDR) are disordered. The span at 564-576 (PDLKVRPELRGDE) shows a compositional bias: basic and acidic residues. Ser-695 carries the phosphoserine modification.

Belongs to the HPS5 family. As to quaternary structure, component of the biogenesis of lysosome-related organelles complex-2 (or BLOC2) composed of HPS3, HPS5 and HPS6. Interacts with HPS6. Interacts with HPS3. May interact with all alpha-integrin chains that have an aromatic residue before the first lysine of the conserved KXGFFKR motif, including ITGA2, ITGA3, ITGA5 and ITGA6. In terms of tissue distribution, widely expressed. Isoform 1:Highly expressed in lungs and testis. Isoform 2:Highly expressed in placenta, kidney, testis ovary, lung and thymus.

The protein resides in the cytoplasm. It localises to the cytosol. Functionally, may regulate the synthesis and function of lysosomes and of highly specialized organelles, such as melanosomes and platelet dense granules. Regulates intracellular vesicular trafficking in fibroblasts. May be involved in the regulation of general functions of integrins. This is BLOC-2 complex member HPS5 (HPS5) from Homo sapiens (Human).